Here is a 458-residue protein sequence, read N- to C-terminus: Cysteine--tRNA ligase (458 aa).

C27 serves as a coordination point for Zn(2+). Positions 29-39 (MTVYDYMHIGH) match the 'HIGH' region motif. C208, H233, and E237 together coordinate Zn(2+). The 'KMSKS' region motif lies at 265-269 (KMSKS). Residue K268 coordinates ATP.

Belongs to the class-I aminoacyl-tRNA synthetase family. Monomer. Zn(2+) serves as cofactor.

It is found in the cytoplasm. It catalyses the reaction tRNA(Cys) + L-cysteine + ATP = L-cysteinyl-tRNA(Cys) + AMP + diphosphate. This chain is Cysteine--tRNA ligase, found in Coxiella burnetii (strain Dugway 5J108-111).